The sequence spans 340 residues: Protein RecA (340 aa).

67 to 74 contributes to the ATP binding site; it reads GNESSGKT.

It belongs to the RecA family.

The protein resides in the cytoplasm. In terms of biological role, can catalyze the hydrolysis of ATP in the presence of single-stranded DNA, the ATP-dependent uptake of single-stranded DNA by duplex DNA, and the ATP-dependent hybridization of homologous single-stranded DNAs. It interacts with LexA causing its activation and leading to its autocatalytic cleavage. This is Protein RecA from Mycoplasma genitalium (strain ATCC 33530 / DSM 19775 / NCTC 10195 / G37) (Mycoplasmoides genitalium).